An 87-amino-acid polypeptide reads, in one-letter code: Cuticle protein 1 (87 aa).

Glutamine 1 bears the Pyrrolidone carboxylic acid mark. A run of 3 repeats spans residues 5-20 (YPAG…YPNC), 43-58 (YPAG…YPFC), and 71-86 (YPAG…YPYC). Disulfide bonds link cysteine 14–cysteine 20, cysteine 52–cysteine 58, and cysteine 80–cysteine 86.

The protein is Cuticle protein 1 of Blaberus craniifer (Death's head cockroach).